Here is a 302-residue protein sequence, read N- to C-terminus: Sulfate adenylyltransferase subunit 2 (302 aa).

The tract at residues 279 to 302 is disordered; the sequence is ERQGRAIDHDSSGSMELKKRQGYF. Positions 280–302 are enriched in basic and acidic residues; that stretch reads RQGRAIDHDSSGSMELKKRQGYF.

The protein belongs to the PAPS reductase family. CysD subfamily. In terms of assembly, heterodimer composed of CysD, the smaller subunit, and CysN.

The enzyme catalyses sulfate + ATP + H(+) = adenosine 5'-phosphosulfate + diphosphate. Its pathway is sulfur metabolism; hydrogen sulfide biosynthesis; sulfite from sulfate: step 1/3. With CysN forms the ATP sulfurylase (ATPS) that catalyzes the adenylation of sulfate producing adenosine 5'-phosphosulfate (APS) and diphosphate, the first enzymatic step in sulfur assimilation pathway. APS synthesis involves the formation of a high-energy phosphoric-sulfuric acid anhydride bond driven by GTP hydrolysis by CysN coupled to ATP hydrolysis by CysD. The chain is Sulfate adenylyltransferase subunit 2 from Aliivibrio fischeri (strain ATCC 700601 / ES114) (Vibrio fischeri).